The sequence spans 294 residues: Ribosomal RNA small subunit methyltransferase H (294 aa).

S-adenosyl-L-methionine is bound by residues 31 to 33, Asp-49, Phe-76, Asp-97, and Gln-104; that span reads GGY.

This sequence belongs to the methyltransferase superfamily. RsmH family.

The protein localises to the cytoplasm. The enzyme catalyses cytidine(1402) in 16S rRNA + S-adenosyl-L-methionine = N(4)-methylcytidine(1402) in 16S rRNA + S-adenosyl-L-homocysteine + H(+). In terms of biological role, specifically methylates the N4 position of cytidine in position 1402 (C1402) of 16S rRNA. This is Ribosomal RNA small subunit methyltransferase H from Wolbachia pipientis subsp. Culex pipiens (strain wPip).